The following is a 160-amino-acid chain: uncharacterized protein (160 aa).

The chain crosses the membrane as a helical span at residues 27 to 47; sequence VMNSYFIAGCGPAVCYYAVSW.

The protein localises to the membrane. This is an uncharacterized protein from Homo sapiens (Human).